The following is a 209-amino-acid chain: Large ribosomal subunit protein uL3 (209 aa).

Q150 carries the N5-methylglutamine modification.

It belongs to the universal ribosomal protein uL3 family. As to quaternary structure, part of the 50S ribosomal subunit. Forms a cluster with proteins L14 and L19. Post-translationally, methylated by PrmB.

In terms of biological role, one of the primary rRNA binding proteins, it binds directly near the 3'-end of the 23S rRNA, where it nucleates assembly of the 50S subunit. This chain is Large ribosomal subunit protein uL3, found in Ectopseudomonas mendocina (strain ymp) (Pseudomonas mendocina).